Reading from the N-terminus, the 600-residue chain is Spastin (600 aa).

The segment at 1 to 39 is disordered; it reads MNSPGGRNDKKKPVTPAAETGPGSPTTPPSTETQVVLAP. The Cytoplasmic portion of the chain corresponds to 1 to 53; it reads MNSPGGRNDKKKPVTPAAETGPGSPTTPPSTETQVVLAPPSPHKRNLHLFSYP. A compositionally biased stretch (low complexity) spans 15–33; that stretch reads TPAAETGPGSPTTPPSTET. The segment at residues 54-74 is an intramembrane region (helical); that stretch reads LLAVFSLLRFLAFQLGLLFVW. Over 75 to 600 the chain is Cytoplasmic; it reads CCELLSRSVM…WNQDFGDTTV (526 aa). The MIT domain occupies 110–185; the sequence is YHQQAFQYIS…IMAKDRLQLL (76 aa). A disordered region spans residues 213 to 294; it reads GLLKPEKGAV…KPATPTTAVR (82 aa). Residues 216–228 show a composition bias toward basic and acidic residues; that stretch reads KPEKGAVPKKKDP. The segment covering 253–291 has biased composition (polar residues); sequence PNCTSVPTSARQAGAHTPSNRGATGKNNTRTNKPATPTT. 366–373 contacts ATP; sequence GPPGNGKT.

Belongs to the AAA ATPase family. Spastin subfamily. As to quaternary structure, homohexamer. The homohexamer is stabilized by ATP-binding. The homohexamer may adopt a ring conformation through which microtubules pass prior to being severed. Interacts with microtubules.

The protein localises to the membrane. Its subcellular location is the cytoplasm. It is found in the cytoskeleton. It localises to the microtubule organizing center. The protein resides in the centrosome. The protein localises to the perinuclear region. Its subcellular location is the nucleus. The enzyme catalyses n ATP + n H2O + a microtubule = n ADP + n phosphate + (n+1) alpha/beta tubulin heterodimers.. Functionally, ATP-dependent microtubule severing protein that specifically recognizes and cuts microtubules that are polyglutamylated. Preferentially recognizes and acts on microtubules decorated with short polyglutamate tails: severing activity increases as the number of glutamates per tubulin rises from one to eight, but decreases beyond this glutamylation threshold. Microtubule severing promotes reorganization of cellular microtubule arrays and the release of microtubules from the centrosome following nucleation. Required for membrane traffic from the endoplasmic reticulum (ER) to the Golgi and for completion of the abscission stage of cytokinesis. Also plays a role in axon growth and the formation of axonal branches. The polypeptide is Spastin (Xenopus laevis (African clawed frog)).